A 215-amino-acid chain; its full sequence is Peptide methionine sulfoxide reductase MsrA (215 aa).

C58 is an active-site residue.

Belongs to the MsrA Met sulfoxide reductase family.

The enzyme catalyses L-methionyl-[protein] + [thioredoxin]-disulfide + H2O = L-methionyl-(S)-S-oxide-[protein] + [thioredoxin]-dithiol. It carries out the reaction [thioredoxin]-disulfide + L-methionine + H2O = L-methionine (S)-S-oxide + [thioredoxin]-dithiol. Has an important function as a repair enzyme for proteins that have been inactivated by oxidation. Catalyzes the reversible oxidation-reduction of methionine sulfoxide in proteins to methionine. The polypeptide is Peptide methionine sulfoxide reductase MsrA (Pseudomonas syringae pv. tomato (strain ATCC BAA-871 / DC3000)).